A 69-amino-acid polypeptide reads, in one-letter code: Putative antitoxin AF_1481 (69 aa).

The protein belongs to the UPF0330 family.

In terms of biological role, possibly the antitoxin component of a type II toxin-antitoxin (TA) system. The polypeptide is Putative antitoxin AF_1481 (Archaeoglobus fulgidus (strain ATCC 49558 / DSM 4304 / JCM 9628 / NBRC 100126 / VC-16)).